We begin with the raw amino-acid sequence, 94 residues long: MIFLLPPVIFVMLLAESVLILGDSEDADLMEMVQMSRPFFNPIIPAVEFVDLREERQRACGHLHDPCPNDRPGHRTCCIGLQCRYGSCLVQVGR.

The first 22 residues, 1 to 22, serve as a signal peptide directing secretion; that stretch reads MIFLLPPVIFVMLLAESVLILG. Residues 23-58 constitute a propeptide that is removed on maturation; it reads DSEDADLMEMVQMSRPFFNPIIPAVEFVDLREERQR. Intrachain disulfides connect C60/C78, C67/C83, and C77/C88.

This sequence belongs to the neurotoxin 14 (magi-1) family. OAIP-1 subfamily. Expressed by the venom gland.

Its subcellular location is the secreted. In terms of biological role, probable ion channel inhibitor. The polypeptide is U27-theraphotoxin-Cg1a (Chilobrachys guangxiensis (Chinese earth tiger tarantula)).